Here is a 392-residue protein sequence, read N- to C-terminus: Bifunctional enzyme Fae/Hps (392 aa).

The tract at residues 1–161 is formaldehyde-activating enzyme; that stretch reads MFQIGEALMG…EESNKSTHAI (161 aa). The active-site Proton donor is histidine 17. Substrate is bound by residues aspartate 19, leucine 48, lysine 66, threonine 68, and glutamine 83. A 3-hexulose-6-phosphate synthase region spans residues 162-392; it reads MGFKVTRLWD…IDQFRVMTDF (231 aa).

The protein in the N-terminal section; belongs to the formaldehyde-activating enzyme family. It in the C-terminal section; belongs to the HPS/KGPDC family. HPS subfamily.

It catalyses the reaction 5,6,7,8-tetrahydromethanopterin + formaldehyde = 5,10-methylenetetrahydromethanopterin + H2O. The enzyme catalyses D-ribulose 5-phosphate + formaldehyde = D-arabino-hex-3-ulose 6-phosphate. The protein operates within carbohydrate biosynthesis; D-ribose 5-phosphate biosynthesis. Its function is as follows. Catalyzes the condensation of formaldehyde with tetrahydromethanopterin (H(4)MPT) to 5,10-methylenetetrahydromethanopterin. Catalyzes the reversible formation of ribulose-5-phosphate and formaldehyde from 3-hexulose-6-phosphate. The polypeptide is Bifunctional enzyme Fae/Hps (Methanosarcina mazei (strain ATCC BAA-159 / DSM 3647 / Goe1 / Go1 / JCM 11833 / OCM 88) (Methanosarcina frisia)).